A 608-amino-acid polypeptide reads, in one-letter code: Nuclear receptor subfamily 2 group C member 1 (608 aa).

Residues 1–179 are required for interaction with KAT2B; it reads MASIEEIAHQ…RLQRCIAFGM (179 aa). A DNA-binding region (nuclear receptor) is located at residues 111–186; the sequence is FDLCVVCGDK…FGMKQDSVQC (76 aa). 2 NR C4-type zinc fingers span residues 114 to 134 and 150 to 169; these read CVVCGDKASGRHYGEVTCEGC and CRGSKDCIINKHHRNRCQYC. 2 positions are modified to phosphoserine: serine 198 and serine 216. At threonine 221 the chain carries Phosphothreonine. The residue at position 223 (threonine 223) is a Phosphothreonine; by MAPK1. A Glycyl lysine isopeptide (Lys-Gly) (interchain with G-Cter in SUMO); alternate cross-link involves residue lysine 251. Lysine 251 is covalently cross-linked (Glycyl lysine isopeptide (Lys-Gly) (interchain with G-Cter in SUMO2); alternate). One can recognise an NR LBD domain in the interval 353 to 595; that stretch reads GNVHLIAGDS…SVIPHILKME (243 aa). Phosphoserine; by PKC is present on serine 586. The segment at 589 to 608 is required for interaction with NRIP1; that stretch reads PHILKMEPADYNSQIIGHSI. Lysine 593 is covalently cross-linked (Glycyl lysine isopeptide (Lys-Gly) (interchain with G-Cter in SUMO2)).

This sequence belongs to the nuclear hormone receptor family. NR2 subfamily. As to quaternary structure, homodimer. Heterodimer; with NR2C2 which is required for chromatin remodeling and for binding to promoter regions such as globin DR1 repeats. Interacts with ESR1; the interaction prevents homodimerization of ESR1 and suppresses its transcriptional activity and cell growth. Interacts with NRIP1 (via its LXXLL motifs); the interaction provides corepressor activity. Interacts with HDAC3 (via the DNA-binding domain); the interaction recruits phosphorylated NR2C1 to PML bodies for sumoylation. Interacts with HDAC4 (via the DNA-binding domain). Interacts with PIAS1; the interaction is required for sumoylation of NR2C1. Interacts with UBE2I; the interaction is required for sumoylation of NR2C1. Interacts with KAT2B; the interaction acts as a corepressor of gene expression. Post-translationally, sumoylation requires both PIAS1 and UBE2I. Sumoylation appears to dissociate NR2C1 from the PML nuclear bodies. Enhances the interaction with NRIP1 but inhibits interaction with KAT2B. In proliferating cells, stimulation by all-trans retinoic acid, activation of MAPK1-mediated phosphorylation and recruitment to PML bodies with subsequent sumoylation, suppresses OCT4 expression. In terms of processing, phosphorylated on several serine and threonine residues. Phosphorylation on Thr-223, stimulated by all-trans retinoic acid (atRA) mediates PML location and sumoylation in proliferating cells which then modulates its association with effector molecules, KAT2B and NRIP1. Phosphorylation on Ser-586 by PKC is important for protein stability and function as activator of RARB.

Its subcellular location is the nucleus. It localises to the PML body. Its function is as follows. Orphan nuclear receptor. Binds the IR7 element in the promoter of its own gene in an autoregulatory negative feedback mechanism. Primarily repressor of a broad range of genes including ESR1 and RARB. Together with NR2C2, forms the core of the DRED (direct repeat erythroid-definitive) complex that represses embryonic and fetal globin transcription. Binds to hormone response elements (HREs) consisting of two 5'-AGGTCA-3' half site direct repeat consensus sequences. Also activator of OCT4 gene expression. Plays a fundamental role in early embryogenesis and regulates embryonic stem cell proliferation and differentiation. Mediator of retinoic acid-regulated preadipocyte proliferation. This is Nuclear receptor subfamily 2 group C member 1 (NR2C1) from Bos taurus (Bovine).